Consider the following 500-residue polypeptide: NAD(P)H-quinone oxidoreductase chain 4, chloroplastic (500 aa).

The next 14 helical transmembrane spans lie at 4-24 (FPWL…IFFL), 35-55 (YTIC…CYHF), 87-107 (IGPV…AWPV), 113-130 (LFHF…GSFS), 134-154 (LLLF…LLSM), 167-187 (FILY…GVGL), 207-227 (VALE…KLPI), 242-262 (HYST…YGLI), 272-292 (AHSI…IYAA), 305-325 (IAYS…SITD), 330-350 (GAIL…FLAG), 386-406 (LALP…GIIT), 416-436 (IVIT…LLSM), and 462-482 (LFVS…PDFV).

Belongs to the complex I subunit 4 family.

It localises to the plastid. It is found in the chloroplast thylakoid membrane. The catalysed reaction is a plastoquinone + NADH + (n+1) H(+)(in) = a plastoquinol + NAD(+) + n H(+)(out). It carries out the reaction a plastoquinone + NADPH + (n+1) H(+)(in) = a plastoquinol + NADP(+) + n H(+)(out). In Guizotia abyssinica (Niger), this protein is NAD(P)H-quinone oxidoreductase chain 4, chloroplastic.